Here is a 415-residue protein sequence, read N- to C-terminus: MIDRKLLLQDFDKVALSLKKRNHAMDDELERLREAIAHYKKQLIELEGLQAFQNKVSKEFGIKMAQKMDTSDLKKELENNKIKLNELSKSVGEAEQEMDLKLSIIPNLVDEKTPLGASEEDNIEIKKILTPRNFTFKPKEHFELAQQNGWIDFESGVKLAKSRFSVIRGFGAKIYRALIHLMLDFNEKNGFEIIYTPALVNEKMLFGTGQLPKFKEDVFKIENENLYLIPTAEVTLTNLYNDTIISVENLPIKMTAHTPCFRSEAGSAGKDTRGMIRQHQFDKVELVAITHPKESDAMQEHMLESASEILKALELPHRFVQLCSGDLGFSASNTIDIEVWLPGQNCYREISSVSNTRDFQARRAKIRFKENQKNQLVHTLNGSSLAVGRTMVALMENHQQADGSIHIPKALEKYL.

T231 to E233 serves as a coordination point for L-serine. R262 to E264 serves as a coordination point for ATP. Position 285 (E285) interacts with L-serine. An ATP-binding site is contributed by E349 to S352. Residue S383 coordinates L-serine.

It belongs to the class-II aminoacyl-tRNA synthetase family. Type-1 seryl-tRNA synthetase subfamily. As to quaternary structure, homodimer. The tRNA molecule binds across the dimer.

Its subcellular location is the cytoplasm. The enzyme catalyses tRNA(Ser) + L-serine + ATP = L-seryl-tRNA(Ser) + AMP + diphosphate + H(+). It catalyses the reaction tRNA(Sec) + L-serine + ATP = L-seryl-tRNA(Sec) + AMP + diphosphate + H(+). It participates in aminoacyl-tRNA biosynthesis; selenocysteinyl-tRNA(Sec) biosynthesis; L-seryl-tRNA(Sec) from L-serine and tRNA(Sec): step 1/1. Its function is as follows. Catalyzes the attachment of serine to tRNA(Ser). Is also able to aminoacylate tRNA(Sec) with serine, to form the misacylated tRNA L-seryl-tRNA(Sec), which will be further converted into selenocysteinyl-tRNA(Sec). This Helicobacter pylori (strain J99 / ATCC 700824) (Campylobacter pylori J99) protein is Serine--tRNA ligase.